The chain runs to 290 residues: ATP synthase gamma chain (290 aa).

Belongs to the ATPase gamma chain family. In terms of assembly, F-type ATPases have 2 components, CF(1) - the catalytic core - and CF(0) - the membrane proton channel. CF(1) has five subunits: alpha(3), beta(3), gamma(1), delta(1), epsilon(1). CF(0) has three main subunits: a, b and c.

The protein localises to the cell inner membrane. Functionally, produces ATP from ADP in the presence of a proton gradient across the membrane. The gamma chain is believed to be important in regulating ATPase activity and the flow of protons through the CF(0) complex. In Desulfotalea psychrophila (strain LSv54 / DSM 12343), this protein is ATP synthase gamma chain.